We begin with the raw amino-acid sequence, 430 residues long: Enolase (430 aa).

Gln166 provides a ligand contact to (2R)-2-phosphoglycerate. Catalysis depends on Glu208, which acts as the Proton donor. Mg(2+)-binding residues include Asp245, Glu288, and Asp315. Lys340, Arg369, Ser370, and Lys391 together coordinate (2R)-2-phosphoglycerate. Lys340 functions as the Proton acceptor in the catalytic mechanism.

This sequence belongs to the enolase family. Mg(2+) is required as a cofactor.

It localises to the cytoplasm. The protein resides in the secreted. Its subcellular location is the cell surface. It catalyses the reaction (2R)-2-phosphoglycerate = phosphoenolpyruvate + H2O. The protein operates within carbohydrate degradation; glycolysis; pyruvate from D-glyceraldehyde 3-phosphate: step 4/5. Its function is as follows. Catalyzes the reversible conversion of 2-phosphoglycerate (2-PG) into phosphoenolpyruvate (PEP). It is essential for the degradation of carbohydrates via glycolysis. In Clostridium beijerinckii (strain ATCC 51743 / NCIMB 8052) (Clostridium acetobutylicum), this protein is Enolase.